We begin with the raw amino-acid sequence, 549 residues long: Undecaprenyl phosphate-alpha-4-amino-4-deoxy-L-arabinose arabinosyl transferase (549 aa).

12 helical membrane passes run 9–29 (LLLI…GLWI), 80–100 (LFGV…LAYL), 112–132 (SLAC…SGYA), 136–156 (PQFT…LDAG), 166–186 (ILLG…AWLL), 204–224 (LLGY…PWAL), 256–276 (PWWF…GLLP), 288–308 (QAPV…FSLS), 312–332 (LPTY…HALV), 346–366 (NGLL…YLQL), 376–396 (FELF…LAQW), and 402–422 (AWAA…AAMP).

It belongs to the glycosyltransferase 83 family.

Its subcellular location is the cell inner membrane. The enzyme catalyses 4-amino-4-deoxy-alpha-L-arabinopyranosyl di-trans,octa-cis-undecaprenyl phosphate + lipid IVA = lipid IIA + di-trans,octa-cis-undecaprenyl phosphate.. Its pathway is lipopolysaccharide metabolism; 4-amino-4-deoxy-beta-L-arabinose-lipid A biosynthesis. Functionally, catalyzes the transfer of the L-Ara4N moiety of the glycolipid undecaprenyl phosphate-alpha-L-Ara4N to lipid A. The modified arabinose is attached to lipid A and is required for resistance to polymyxin and cationic antimicrobial peptides. The protein is Undecaprenyl phosphate-alpha-4-amino-4-deoxy-L-arabinose arabinosyl transferase of Pseudomonas aeruginosa (strain UCBPP-PA14).